Consider the following 198-residue polypeptide: Dephospho-CoA kinase (198 aa).

In terms of domain architecture, DPCK spans 3-198 (IVGITGGIGS…LLAKERLELA (196 aa)). 11-16 (GSGKTT) is a binding site for ATP.

It belongs to the CoaE family.

It localises to the cytoplasm. The catalysed reaction is 3'-dephospho-CoA + ATP = ADP + CoA + H(+). It participates in cofactor biosynthesis; coenzyme A biosynthesis; CoA from (R)-pantothenate: step 5/5. In terms of biological role, catalyzes the phosphorylation of the 3'-hydroxyl group of dephosphocoenzyme A to form coenzyme A. This is Dephospho-CoA kinase from Dehalococcoides mccartyi (strain ATCC BAA-2266 / KCTC 15142 / 195) (Dehalococcoides ethenogenes (strain 195)).